The chain runs to 432 residues: MDEAVGDLKQALPCVAESPTVHVEVHQRGSSTAKKEDINLSVRKLLNRHNIVFGDYTWTEFDEPFLTRNVQSVSIIDTELKVKDSQPIDLSACTVALHIFQLNEDGPSSENLEEETENIIAANHWVLPAAEFHGLWDSLVYDVEVKSHLLDYVMTTLLFSDKNVNSNLITWNRVVLLHGPPGTGKTSLCKALAQKLTIRLSSRYRYGQLIEINSHSLFSKWFSESGKLVTKMFQKIQDLIDDKDALVFVLIDEVESLTAARNACRAGTEPSDAIRVVNAVLTQIDQIKRHSNVVILTTSNITEKIDVAFVDRADIKQYIGPPSAAAIFKIYLSCLEELMKCQIIYPRQQLLTLRELEMIGFIENNVSKLSLLLNDISRKSEGLSGRVLRKLPFLAHALYVQAPTVTIEGFLQALSLAVDKQFEERKKLAAYI.

Position 1 is an N-acetylmethionine (methionine 1). 179 to 186 serves as a coordination point for ATP; that stretch reads GPPGTGKT.

It belongs to the AAA ATPase family. PCH2 subfamily. As to quaternary structure, specifically interacts with the ligand binding domain of the thyroid receptor (TR). This interaction does not require the presence of thyroid hormone for its interaction. Interacts with HPV16 E1. Interacts with proteasome subunit PSMA8; to participate in meiosis progression during spermatogenesis.

Its function is as follows. Plays a key role in chromosome recombination and chromosome structure development during meiosis. Required at early steps in meiotic recombination that leads to non-crossovers pathways. Also needed for efficient completion of homologous synapsis by influencing crossover distribution along the chromosomes affecting both crossovers and non-crossovers pathways. Also required for development of higher-order chromosome structures and is needed for synaptonemal-complex formation. In males, required for efficient synapsis of the sex chromosomes and for sex body formation. Promotes early steps of the DNA double-strand breaks (DSBs) repair process upstream of the assembly of RAD51 complexes. Required for depletion of HORMAD1 and HORMAD2 from synapsed chromosomes. Plays a role in mitotic spindle assembly checkpoint (SAC) activation. This chain is Pachytene checkpoint protein 2 homolog (TRIP13), found in Homo sapiens (Human).